The following is a 157-amino-acid chain: Large ribosomal subunit protein uL11 (157 aa).

Belongs to the universal ribosomal protein uL11 family.

This protein binds directly to 26S ribosomal RNA. This Chlamydomonas reinhardtii (Chlamydomonas smithii) protein is Large ribosomal subunit protein uL11 (RPL12).